The chain runs to 27 residues: Caerulein precursor fragment R8 (27 aa).

In terms of tissue distribution, expressed by the skin glands.

It localises to the secreted. Its function is as follows. Antimicrobial peptide. The chain is Caerulein precursor fragment R8 from Xenopus ruwenzoriensis (Uganda clawed frog).